We begin with the raw amino-acid sequence, 166 residues long: Transcription antitermination protein NusB (166 aa).

Positions 1 to 18 (MISDESDRFNPRDPKPAD) are enriched in basic and acidic residues. The interval 1–28 (MISDESDRFNPRDPKPADAGKPSKSAKR) is disordered.

The protein belongs to the NusB family.

Involved in transcription antitermination. Required for transcription of ribosomal RNA (rRNA) genes. Binds specifically to the boxA antiterminator sequence of the ribosomal RNA (rrn) operons. This Pseudomonas putida (strain GB-1) protein is Transcription antitermination protein NusB.